Here is an 80-residue protein sequence, read N- to C-terminus: Acyl carrier protein (80 aa).

Positions 4–79 (DEIFSKVRSI…DVVNFIKKRK (76 aa)) constitute a Carrier domain. Serine 39 bears the O-(pantetheine 4'-phosphoryl)serine mark.

The protein belongs to the acyl carrier protein (ACP) family. Post-translationally, 4'-phosphopantetheine is transferred from CoA to a specific serine of apo-ACP by AcpS. This modification is essential for activity because fatty acids are bound in thioester linkage to the sulfhydryl of the prosthetic group.

It localises to the cytoplasm. Its pathway is lipid metabolism; fatty acid biosynthesis. In terms of biological role, carrier of the growing fatty acid chain in fatty acid biosynthesis. This chain is Acyl carrier protein, found in Borrelia garinii subsp. bavariensis (strain ATCC BAA-2496 / DSM 23469 / PBi) (Borreliella bavariensis).